A 436-amino-acid chain; its full sequence is Cysteine--tRNA ligase (436 aa).

Residue cysteine 24 coordinates Zn(2+). The 'HIGH' region motif lies at 26 to 36; the sequence is PTVYNHIHIGN. Cysteine 202, histidine 227, and glutamate 231 together coordinate Zn(2+). Positions 259–263 match the 'KMSKS' region motif; that stretch reads KMSKS. Lysine 262 is an ATP binding site.

This sequence belongs to the class-I aminoacyl-tRNA synthetase family. Monomer. It depends on Zn(2+) as a cofactor.

It is found in the cytoplasm. It carries out the reaction tRNA(Cys) + L-cysteine + ATP = L-cysteinyl-tRNA(Cys) + AMP + diphosphate. The sequence is that of Cysteine--tRNA ligase from Ureaplasma parvum serovar 3 (strain ATCC 700970).